The chain runs to 214 residues: tRNA (guanine-N(7)-)-methyltransferase (214 aa).

4 residues coordinate S-adenosyl-L-methionine: glutamate 43, glutamate 68, aspartate 95, and aspartate 117. The active site involves aspartate 117. Substrate is bound by residues lysine 121, aspartate 153, and threonine 190–glutamate 193.

The protein belongs to the class I-like SAM-binding methyltransferase superfamily. TrmB family.

It catalyses the reaction guanosine(46) in tRNA + S-adenosyl-L-methionine = N(7)-methylguanosine(46) in tRNA + S-adenosyl-L-homocysteine. It participates in tRNA modification; N(7)-methylguanine-tRNA biosynthesis. Functionally, catalyzes the formation of N(7)-methylguanine at position 46 (m7G46) in tRNA. The sequence is that of tRNA (guanine-N(7)-)-methyltransferase from Staphylococcus aureus (strain MSSA476).